The sequence spans 289 residues: Ribosomal RNA small subunit methyltransferase I (289 aa).

The protein belongs to the methyltransferase superfamily. RsmI family.

The protein localises to the cytoplasm. It catalyses the reaction cytidine(1402) in 16S rRNA + S-adenosyl-L-methionine = 2'-O-methylcytidine(1402) in 16S rRNA + S-adenosyl-L-homocysteine + H(+). In terms of biological role, catalyzes the 2'-O-methylation of the ribose of cytidine 1402 (C1402) in 16S rRNA. This chain is Ribosomal RNA small subunit methyltransferase I, found in Halalkalibacterium halodurans (strain ATCC BAA-125 / DSM 18197 / FERM 7344 / JCM 9153 / C-125) (Bacillus halodurans).